Consider the following 570-residue polypeptide: Formate--tetrahydrofolate ligase (570 aa).

65–72 (TPFGEGKT) provides a ligand contact to ATP.

The protein belongs to the formate--tetrahydrofolate ligase family.

The enzyme catalyses (6S)-5,6,7,8-tetrahydrofolate + formate + ATP = (6R)-10-formyltetrahydrofolate + ADP + phosphate. It functions in the pathway one-carbon metabolism; tetrahydrofolate interconversion. This chain is Formate--tetrahydrofolate ligase, found in Shewanella sediminis (strain HAW-EB3).